The primary structure comprises 446 residues: COBRA-like protein 1 (446 aa).

The N-terminal stretch at 1 to 28 (MALLLLRMGVSVALLVAFFSSLIPSSEA) is a signal peptide. N-linked (GlcNAc...) asparagine glycans are attached at residues N37, N162, N170, N209, N234, N316, N331, N350, and N419. The GPI-anchor amidated alanine moiety is linked to residue A420. Positions 421 to 446 (STRVMSSILLPFITIWTALTFLMVYA) are cleaved as a propeptide — removed in mature form.

It belongs to the COBRA family.

The protein resides in the cell membrane. Involved in determining the orientation of cell expansion, probably by playing an important role in cellulose deposition. May act by recruiting cellulose synthesizing complexes to discrete positions on the cell surface. This Oryza sativa subsp. japonica (Rice) protein is COBRA-like protein 1 (BC1L6).